The primary structure comprises 185 residues: Prenylated Rab acceptor protein 1 (185 aa).

The Cytoplasmic portion of the chain corresponds to 1-78 (MAAQKDQQKD…RNVEYYQSNY (78 aa)). Residues 30–54 (AGREWLERRRATIRPWSTFVDQQRF) are required for interaction with prenylated RAB3A and VAMP2. 2 helical membrane-spanning segments follow: residues 79 to 94 (VFVF…VTSP) and 95 to 112 (MLLV…ILYL). At 113-131 (RTLESKLVLFGREVSPAHQ) the chain is on the cytoplasmic side. 2 helical membrane-spanning segments follow: residues 132-148 (YALA…LAGA) and 149-165 (GSAV…VIGS). The segment at 165-185 (SHAAFHQIEAVDGEELQMEPV) is required for interaction with GDI1. Residues 166-185 (HAAFHQIEAVDGEELQMEPV) are Cytoplasmic-facing. The required for interaction with prenylated RAB3A and VAMP2 stretch occupies residues 175–185 (VDGEELQMEPV). A homodimerization region spans residues 175–185 (VDGEELQMEPV).

Belongs to the PRA1 family. As to quaternary structure, homodimer. Interacts with VAMP2 (synaptobrevin-2), GDI1, and PCLO. Interacts specifically with prenylated Rab proteins; strongly with RAB4B, RAB5A and RAB5C, and weakly with RAB4A, RAB6, RAB7A, RAB17 and RAB22. Interacts with NDRG1. Ubiquitous. Strongest expression found in placenta, pituitary gland, kidney, lung and stomach.

It localises to the cell membrane. Its subcellular location is the cytoplasm. The protein localises to the golgi apparatus. The protein resides in the cytoplasmic vesicle. It is found in the secretory vesicle. It localises to the synaptic vesicle. In terms of biological role, general Rab protein regulator required for vesicle formation from the Golgi complex. May control vesicle docking and fusion by mediating the action of Rab GTPases to the SNARE complexes. In addition it inhibits the removal of Rab GTPases from the membrane by GDI. The chain is Prenylated Rab acceptor protein 1 (RABAC1) from Homo sapiens (Human).